Reading from the N-terminus, the 78-residue chain is Acyl carrier protein (78 aa).

The Carrier domain maps to 2 to 77; it reads STIEERVKKI…AAIDYIEAAN (76 aa). S37 is subject to O-(pantetheine 4'-phosphoryl)serine.

This sequence belongs to the acyl carrier protein (ACP) family. 4'-phosphopantetheine is transferred from CoA to a specific serine of apo-ACP by AcpS. This modification is essential for activity because fatty acids are bound in thioester linkage to the sulfhydryl of the prosthetic group.

It is found in the cytoplasm. It participates in lipid metabolism; fatty acid biosynthesis. Carrier of the growing fatty acid chain in fatty acid biosynthesis. The protein is Acyl carrier protein of Edwardsiella ictaluri (strain 93-146).